The chain runs to 403 residues: Protein-glutamate methylesterase/protein-glutamine glutaminase (403 aa).

Residues 8–126 (AVLIVDDSAL…SAHLRTVSRK (119 aa)) form the Response regulatory domain. The residue at position 59 (Asp-59) is a 4-aspartylphosphate. Residues 204 to 393 (PLRESGALQI…VSLDDMAATI (190 aa)) enclose the CheB-type methylesterase domain. Residues Ser-219, His-246, and Asp-342 contribute to the active site.

This sequence belongs to the CheB family. Post-translationally, phosphorylated by CheA. Phosphorylation of the N-terminal regulatory domain activates the methylesterase activity.

Its subcellular location is the cytoplasm. It catalyses the reaction [protein]-L-glutamate 5-O-methyl ester + H2O = L-glutamyl-[protein] + methanol + H(+). The catalysed reaction is L-glutaminyl-[protein] + H2O = L-glutamyl-[protein] + NH4(+). Involved in chemotaxis. Part of a chemotaxis signal transduction system that modulates chemotaxis in response to various stimuli. Catalyzes the demethylation of specific methylglutamate residues introduced into the chemoreceptors (methyl-accepting chemotaxis proteins or MCP) by CheR. Also mediates the irreversible deamidation of specific glutamine residues to glutamic acid. This Treponema pallidum (strain Nichols) protein is Protein-glutamate methylesterase/protein-glutamine glutaminase.